We begin with the raw amino-acid sequence, 157 residues long: Parasitophorous vacuole membrane protein S16 (157 aa).

An N-terminal signal peptide occupies residues 1 to 25 (MNIRKFIPSLALMLIFFAFANLVLS). Over 26–105 (DANDKAKKPA…DKKTTVNRNL (80 aa)) the chain is Extracellular. A disordered region spans residues 30-74 (KAKKPAGKGSPSTLQTPGSSSGASLHAVGPNQGGLSQGLSGKDSA). A compositionally biased stretch (polar residues) spans 39–52 (SPSTLQTPGSSSGA). A helical membrane pass occupies residues 106–126 (IISTAVTNMIMLIILSGIVGF). The Cytoplasmic portion of the chain corresponds to 127 to 157 (KVKKTKNADDDKGDKDKDKDNTDEGDEGDDS). The segment at 130 to 157 (KTKNADDDKGDKDKDKDNTDEGDEGDDS) is disordered. A compositionally biased stretch (basic and acidic residues) spans 132–148 (KNADDDKGDKDKDKDNT).

It localises to the parasitophorous vacuole membrane. It is found in the vacuole. Its function is as follows. Involved in male gametogenesis. Required for exflagellation of male gametocytes. May play a role in parasite transmission in the mosquito. Binds to the mosquito vector midgut. The polypeptide is Parasitophorous vacuole membrane protein S16 (Plasmodium falciparum (isolate 3D7)).